The primary structure comprises 55 residues: MASSTDVRPKITLACEVCKHRNYITKKNRRNDPDRLELKKFCPNCGTHQSHRESK.

Belongs to the bacterial ribosomal protein bL33 family.

This chain is Large ribosomal subunit protein bL33A, found in Rhodococcus jostii (strain RHA1).